The following is a 265-amino-acid chain: MRATIDDPQAALPRILCLHGGGSNSRIFKAQTRALRYELSNYFRFVFVEGPFDSEPGPDVTSAYEKFGPFRRWFRSGPQHPPIDSHTAVACIEESIYAAMERDDLQGGTGDYVAVMGFSQGAKLAASLLFRQQIRAEKLGQAMSGTNFRFAILLNGRGPLVSMDPELVMNTALMDASQIALDRPVTLEDLCRKEHVLRLPTIHVHGLQDPGLMLHRVLLREYCSKNARLVEWDGAHRVPIKTKDVLPLVHEILQLAKQTGVVFAA.

Active-site charge relay system residues include Ser119, Asp209, and His236.

The protein belongs to the LovG family.

It participates in secondary metabolite biosynthesis. Functionally, probable esterase; part of the gene cluster that mediates the biosynthesis of azaterrilone A and other azaphilones, a class of fungal metabolites characterized by a highly oxygenated pyrano-quinone bicyclic core and exhibiting a broad range of bioactivities. The first step of the pathway begins with the non-reducing polyketide synthase tazA that assembles one acetyl-CoA starter unit, five malonyl-CoA units, and catalyzes a series of Claisen condensations, methylation, PT-mediated cyclization, and finally releases the first hexaketide precursor through the R-domain. The tazA product then undergoes reduction on its terminal ketone and the following pyran-ring formation by yet undetermined enzyme(s). Dehydration and enoyl reduction, possibly involving the trans-enoyl reductase tazE leads to the next intermediate. TazD is predicted as an acetyltransferase and might catalyze the acetylation steps leading to the synthesis of azaterrilone A. Azaterrilone A is not the final product of the taz pathway and both the highly reducing polyketide synthase tazB and the dual enzyme tazHJ catalyze late steps of the pathway, leading to the production of the 2 final stereoisomers that contain additional polyketide modification whose structures have still to be determined. The protein is Probable esterase tazC of Aspergillus terreus (strain NIH 2624 / FGSC A1156).